Consider the following 695-residue polypeptide: Elongation factor G (695 aa).

The tr-type G domain occupies 8 to 282 (EKTRNIGIMA…AVLDYLPAPT (275 aa)). GTP-binding positions include 17-24 (AHIDAGKT), 81-85 (DTPGH), and 135-138 (NKMD).

This sequence belongs to the TRAFAC class translation factor GTPase superfamily. Classic translation factor GTPase family. EF-G/EF-2 subfamily.

Its subcellular location is the cytoplasm. Functionally, catalyzes the GTP-dependent ribosomal translocation step during translation elongation. During this step, the ribosome changes from the pre-translocational (PRE) to the post-translocational (POST) state as the newly formed A-site-bound peptidyl-tRNA and P-site-bound deacylated tRNA move to the P and E sites, respectively. Catalyzes the coordinated movement of the two tRNA molecules, the mRNA and conformational changes in the ribosome. The polypeptide is Elongation factor G (Listeria innocua serovar 6a (strain ATCC BAA-680 / CLIP 11262)).